Here is a 106-residue protein sequence, read N- to C-terminus: Small ribosomal subunit protein uS10 (106 aa).

It belongs to the universal ribosomal protein uS10 family. Part of the 30S ribosomal subunit.

In terms of biological role, involved in the binding of tRNA to the ribosomes. The protein is Small ribosomal subunit protein uS10 of Prochlorococcus marinus (strain MIT 9515).